The chain runs to 347 residues: Probable dual-specificity RNA methyltransferase RlmN (347 aa).

Glu-93 functions as the Proton acceptor in the catalytic mechanism. The region spanning 99–333 (TEKRLTACLS…VSLRKSRGLD (235 aa)) is the Radical SAM core domain. Cys-106 and Cys-338 are disulfide-bonded. [4Fe-4S] cluster is bound by residues Cys-113, Cys-117, and Cys-120. S-adenosyl-L-methionine-binding positions include 160 to 161 (GE), Ser-190, 219 to 221 (SLH), and Asn-295. Catalysis depends on Cys-338, which acts as the S-methylcysteine intermediate.

It belongs to the radical SAM superfamily. RlmN family. Requires [4Fe-4S] cluster as cofactor.

The protein localises to the cytoplasm. It carries out the reaction adenosine(2503) in 23S rRNA + 2 reduced [2Fe-2S]-[ferredoxin] + 2 S-adenosyl-L-methionine = 2-methyladenosine(2503) in 23S rRNA + 5'-deoxyadenosine + L-methionine + 2 oxidized [2Fe-2S]-[ferredoxin] + S-adenosyl-L-homocysteine. The catalysed reaction is adenosine(37) in tRNA + 2 reduced [2Fe-2S]-[ferredoxin] + 2 S-adenosyl-L-methionine = 2-methyladenosine(37) in tRNA + 5'-deoxyadenosine + L-methionine + 2 oxidized [2Fe-2S]-[ferredoxin] + S-adenosyl-L-homocysteine. In terms of biological role, specifically methylates position 2 of adenine 2503 in 23S rRNA and position 2 of adenine 37 in tRNAs. In Prochlorococcus marinus (strain MIT 9301), this protein is Probable dual-specificity RNA methyltransferase RlmN.